We begin with the raw amino-acid sequence, 109 residues long: Phycoerythrin alpha-1 subunit (109 aa).

Val-6, Ala-16, Phe-17, Pro-20, Asp-27, Ala-28, and Ala-39 together coordinate (2R,3E)-phycocyanobilin.

It belongs to the phycoerythrin family. As to quaternary structure, heterotetramer of 2 identical alpha chains and 2 identical beta chains which form 2 alpha-beta heterodimers within the heterotetramer. The two alpha-beta heterodimers are rotated to an open configuration in contrast to the closed configuration found in other cryptophyte species due to the insertion of a single amino acid, Asp-65, in a conserved region of the alpha chain. In the open form, the central chromophores are not in physical contact but are separated by a water-filled channel. Contains three phycocyanobilin chromophores with binding mediated by both the alpha and beta subunits.

Its subcellular location is the plastid. The protein resides in the chloroplast thylakoid membrane. In terms of biological role, light-harvesting photosynthetic tetrapyrrole chromophore-protein from the phycobiliprotein complex. The sequence is that of Phycoerythrin alpha-1 subunit from Hemiselmis virescens.